We begin with the raw amino-acid sequence, 209 residues long: Octanoyltransferase (209 aa).

The BPL/LPL catalytic domain maps to 29–209 (GSGDELVWML…KKSFVKIFGE (181 aa)). Residues 68–75 (RGGKYTYH), 141–143 (AIG), and 154–156 (GIA) each bind substrate. The active-site Acyl-thioester intermediate is the Cys172.

This sequence belongs to the LipB family.

It localises to the cytoplasm. It carries out the reaction octanoyl-[ACP] + L-lysyl-[protein] = N(6)-octanoyl-L-lysyl-[protein] + holo-[ACP] + H(+). It participates in protein modification; protein lipoylation via endogenous pathway; protein N(6)-(lipoyl)lysine from octanoyl-[acyl-carrier-protein]: step 1/2. Catalyzes the transfer of endogenously produced octanoic acid from octanoyl-acyl-carrier-protein onto the lipoyl domains of lipoate-dependent enzymes. Lipoyl-ACP can also act as a substrate although octanoyl-ACP is likely to be the physiological substrate. This is Octanoyltransferase from Neorickettsia sennetsu (strain ATCC VR-367 / Miyayama) (Ehrlichia sennetsu).